A 193-amino-acid polypeptide reads, in one-letter code: Acyl carrier protein phosphodiesterase (193 aa).

Belongs to the AcpH family.

The catalysed reaction is holo-[ACP] + H2O = apo-[ACP] + (R)-4'-phosphopantetheine + H(+). Functionally, converts holo-ACP to apo-ACP by hydrolytic cleavage of the phosphopantetheine prosthetic group from ACP. The polypeptide is Acyl carrier protein phosphodiesterase (Serratia proteamaculans (strain 568)).